A 286-amino-acid polypeptide reads, in one-letter code: Enoyl-CoA hydratase ChsH3 (286 aa).

Positions 163-271 constitute a MaoC-like domain; that stretch reads APERAPDLQV…RLVASVVAPT (109 aa). Active-site residues include Asp189 and His194.

Belongs to the enoyl-CoA hydratase/isomerase family. As to quaternary structure, homodimer.

The catalysed reaction is (22E)-3-oxochola-4,22-dien-24-oyl-CoA + H2O = (22S)-hydroxy-3-oxo-chol-4-ene-24-oyl-CoA. It participates in steroid metabolism; cholesterol degradation. Its function is as follows. Degradation of the cholesterol side chain involves 3 multistep beta-oxidation cycles, this is involved in the second cycle. Hydrates bulky steroid enoyl-CoA esters, has highest activity with 3-OCDO-CoA (3-oxochol-4,22-dien-24-oyl-CoA) making (22S)-HOCO-CoA, followed by octenoyl-CoA, with weaker activity on 3-OCDS-CoA (3-oxocholest-4,24-dien-26-oyl-CoA) and none on 3-OPDC-CoA (3-oxo-pregna-4,17-diene-20- carboxyl-CoA). Hydrates the same substrate as EchA19, but the 2 enzymes make different stereoisomers of the product. This chain is Enoyl-CoA hydratase ChsH3, found in Mycobacterium tuberculosis (strain ATCC 25618 / H37Rv).